Reading from the N-terminus, the 344-residue chain is Signal peptide peptidase (344 aa).

Over 1–11 the chain is Lumenal; the sequence is MKNCERFANLA. Residues 12 to 32 form a helical membrane-spanning segment; it reads LAGLTLAPLVVRVNPNLNVIL. Topologically, residues 33 to 62 are cytoplasmic; sequence TACITVYVGCFRSVKDTPPTETMSKEHAMR. The helical transmembrane segment at 63-83 threads the bilayer; the sequence is FPLVGSAMLLSLFLLFKFLSK. The Lumenal segment spans residues 84 to 89; the sequence is DLVNAV. Residues 90 to 110 traverse the membrane as a helical segment; that stretch reads LTAYFFVLGIVALSATLLPAI. Residues 111–136 lie on the Cytoplasmic side of the membrane; that stretch reads RRFLPNPWNDNLIVWRFPYFKSLEVE. The chain crosses the membrane as a helical span at residues 137-157; sequence FTKSQVVAGIPGTFFCAWYAW. The Lumenal portion of the chain corresponds to 158–160; sequence KKH. The helical transmembrane segment at 161 to 181 threads the bilayer; it reads WLANNILGLSFCIQGIEMLSL. Residues 182–188 are Cytoplasmic-facing; the sequence is GSFKTGA. Residues 189 to 209 traverse the membrane as a helical segment; the sequence is ILLAGLFFYDIFWVFFTPVMV. Residue aspartate 198 is part of the active site. The Lumenal segment spans residues 210–230; sequence SVAKSFDAPIKLLFPTGDALR. The chain crosses the membrane as a helical span at residues 231-251; sequence PYSMLGLGDIVIPGIFVALAL. Aspartate 239 is an active-site residue. Residues 252-263 are Cytoplasmic-facing; the sequence is RFDVSRRRQPQY. Residues 264–284 traverse the membrane as a helical segment; that stretch reads FTSAFIGYAVGVILTIVVMNW. Topologically, residues 285–290 are lumenal; it reads FQAAQP. The short motif at 290–292 is the PAL element; it reads PAL. A helical membrane pass occupies residues 291 to 311; that stretch reads ALLYIVPAVIGFLASHCIWNG. At 312 to 344 the chain is on the cytoplasmic side; that stretch reads DIKPLLAFDESKTEEATTDESKTSEEVNKAHDE. The tract at residues 323–344 is disordered; sequence KTEEATTDESKTSEEVNKAHDE.

The protein belongs to the peptidase A22B family. Ubiquitous with the highest expression in emerging leaves, roots, and floral tissues (at the protein level). Highly detected in pollen.

It localises to the endoplasmic reticulum membrane. In terms of biological role, intramembrane-cleaving aspartic protease (I-CLiP) that cleaves type II membrane signal peptides in the hydrophobic plane of the membrane. Catalyzes intramembrane proteolysis of some signal peptides after they have been cleaved from a preprotein, resulting in the release of the fragment from the ER membrane into the cytoplasm. Plays a critical role in the development and function of the reproductive tissues, especially in pollen development. The sequence is that of Signal peptide peptidase (SPP) from Arabidopsis thaliana (Mouse-ear cress).